Consider the following 197-residue polypeptide: Nucleoid occlusion factor SlmA (197 aa).

Positions 7-67 constitute an HTH tetR-type domain; sequence INRREHILQC…GLIDFIEESL (61 aa). Residues 30–49 constitute a DNA-binding region (H-T-H motif); that stretch reads TTAKLAAEVGVSEAALYRHF.

Belongs to the nucleoid occlusion factor SlmA family. Homodimer. Interacts with FtsZ.

It is found in the cytoplasm. It localises to the nucleoid. Functionally, required for nucleoid occlusion (NO) phenomenon, which prevents Z-ring formation and cell division over the nucleoid. Acts as a DNA-associated cell division inhibitor that binds simultaneously chromosomal DNA and FtsZ, and disrupts the assembly of FtsZ polymers. SlmA-DNA-binding sequences (SBS) are dispersed on non-Ter regions of the chromosome, preventing FtsZ polymerization at these regions. The sequence is that of Nucleoid occlusion factor SlmA from Shewanella sediminis (strain HAW-EB3).